The primary structure comprises 367 residues: NADH-quinone oxidoreductase subunit D (367 aa).

Belongs to the complex I 49 kDa subunit family. As to quaternary structure, NDH-1 is composed of 14 different subunits. Subunits NuoB, C, D, E, F, and G constitute the peripheral sector of the complex.

It is found in the cell membrane. It carries out the reaction a quinone + NADH + 5 H(+)(in) = a quinol + NAD(+) + 4 H(+)(out). Functionally, NDH-1 shuttles electrons from NADH, via FMN and iron-sulfur (Fe-S) centers, to quinones in the respiratory chain. The immediate electron acceptor for the enzyme in this species is believed to be ubiquinone. Couples the redox reaction to proton translocation (for every two electrons transferred, four hydrogen ions are translocated across the cytoplasmic membrane), and thus conserves the redox energy in a proton gradient. This chain is NADH-quinone oxidoreductase subunit D, found in Dehalococcoides mccartyi (strain CBDB1).